Reading from the N-terminus, the 423-residue chain is Diaminobutyrate--2-oxoglutarate transaminase (423 aa).

Lys-271 carries the N6-(pyridoxal phosphate)lysine modification.

It belongs to the class-III pyridoxal-phosphate-dependent aminotransferase family. The cofactor is pyridoxal 5'-phosphate.

The catalysed reaction is L-2,4-diaminobutanoate + 2-oxoglutarate = L-aspartate 4-semialdehyde + L-glutamate. It functions in the pathway amine and polyamine biosynthesis; ectoine biosynthesis; L-ectoine from L-aspartate 4-semialdehyde: step 1/3. In terms of biological role, catalyzes reversively the conversion of L-aspartate beta-semialdehyde (ASA) to L-2,4-diaminobutyrate (DABA) by transamination with L-glutamate. The protein is Diaminobutyrate--2-oxoglutarate transaminase (ectB) of Streptomyces coelicolor (strain ATCC BAA-471 / A3(2) / M145).